The chain runs to 232 residues: Exosome complex component RRP40 (232 aa).

The protein belongs to the RRP40 family. As to quaternary structure, component of the RNA exosome complex. Specifically part of the catalytically inactive RNA exosome core complex.

It localises to the cytoplasm. The protein resides in the nucleus. It is found in the nucleolus. Its function is as follows. Non-catalytic component of the RNA exosome complex which has 3'-&gt;5' exoribonuclease activity and participates in a multitude of cellular RNA processing and degradation events. In the nucleus, the RNA exosome complex is involved in proper maturation of stable RNA species such as rRNA, snRNA and snoRNA, in the elimination of RNA processing by-products and non-coding 'pervasive' transcripts such as antisense RNA species, and of mRNAs with processing defects, thereby limiting or excluding their export to the cytoplasm. In the cytoplasm, the RNA exosome complex is involved in general mRNA turnover and specifically degrades inherently unstable mRNAs containing AU-rich elements (AREs) within their 3' untranslated regions, and in RNA surveillance pathways, preventing translation of aberrant mRNAs. The catalytic inactive RNA exosome core complex of 9 subunits is proposed to play a pivotal role in the binding and presentation of RNA for ribonucleolysis, and to serve as a scaffold for the association with catalytic subunits and accessory proteins or complexes. Required generally for normal embryonic and neuronal development. Also plays a critical role in the maintenance of neuronal function in mature flies by controlling the levels of specific mRNAs such as the synaptic regulator Arc1. The polypeptide is Exosome complex component RRP40 (Drosophila melanogaster (Fruit fly)).